Reading from the N-terminus, the 335-residue chain is HTH-type transcriptional regulator MalR (335 aa).

Residues 1-55 enclose the HTH lacI-type domain; sequence MNIKDIARLSGVGVSTVSRVINNHPDVKQSTREKVLQIIKDSNYIPNNSARILKQ. Residues 3-22 constitute a DNA-binding region (H-T-H motif); the sequence is IKDIARLSGVGVSTVSRVIN.

In terms of biological role, repressor of glucanotransferase gene expression. The protein is HTH-type transcriptional regulator MalR of Clostridium butyricum.